Reading from the N-terminus, the 226-residue chain is Lipoprotein-releasing system ATP-binding protein LolD (226 aa).

The region spanning 6-226 (VLISGLTKTF…KLYKGNLEEV (221 aa)) is the ABC transporter domain. 42 to 49 (GESGSGKS) provides a ligand contact to ATP.

Belongs to the ABC transporter superfamily. Lipoprotein translocase (TC 3.A.1.125) family. As to quaternary structure, the complex is composed of two ATP-binding proteins (LolD) and two transmembrane proteins (LolC and LolE).

Its subcellular location is the cell inner membrane. Its function is as follows. Part of the ABC transporter complex LolCDE involved in the translocation of mature outer membrane-directed lipoproteins, from the inner membrane to the periplasmic chaperone, LolA. Responsible for the formation of the LolA-lipoprotein complex in an ATP-dependent manner. This is Lipoprotein-releasing system ATP-binding protein LolD from Treponema denticola (strain ATCC 35405 / DSM 14222 / CIP 103919 / JCM 8153 / KCTC 15104).